A 573-amino-acid chain; its full sequence is Glutamate--tRNA ligase (573 aa).

Residues 107 to 117 (PNPDGAFHLGN) carry the 'HIGH' region motif.

It belongs to the class-I aminoacyl-tRNA synthetase family. Glutamate--tRNA ligase type 2 subfamily.

Its subcellular location is the cytoplasm. It catalyses the reaction tRNA(Glu) + L-glutamate + ATP = L-glutamyl-tRNA(Glu) + AMP + diphosphate. In terms of biological role, catalyzes the attachment of glutamate to tRNA(Glu) in a two-step reaction: glutamate is first activated by ATP to form Glu-AMP and then transferred to the acceptor end of tRNA(Glu). The protein is Glutamate--tRNA ligase of Thermococcus kodakarensis (strain ATCC BAA-918 / JCM 12380 / KOD1) (Pyrococcus kodakaraensis (strain KOD1)).